Consider the following 1025-residue polypeptide: Protein mono-ADP-ribosyltransferase PARP10 (1025 aa).

Threonine 101 carries the phosphothreonine modification. Residue glutamate 106 is modified to ADP-ribosyl glutamic acid. Lysine 140 bears the N6-(ADP-ribosyl)lysine mark. Positions 318 to 346 (GIMTTGSGQEPGQSGTSLRTGPMGSLGQA) are disordered. Polar residues predominate over residues 321–336 (TTGSGQEPGQSGTSLR). Serine 378, serine 423, and serine 431 each carry phosphoserine. 2 disordered regions span residues 569–589 (VLPG…DQED) and 617–644 (LEEE…APST). The segment covering 617–639 (LEEEGPQEQPEEEVTPGHEEEEP) has biased composition (acidic residues). 2 consecutive short sequence motifs (ubiquitin-interacting) follow at residues 650 to 667 (LEEE…LEPQ) and 673 to 690 (QEEA…LLEQ). Serine 663 is modified (phosphoserine). The myc binding stretch occupies residues 700 to 907 (DGGTDGKAQL…CAHGFNRSFC (208 aa)). One can recognise a PARP catalytic domain in the interval 806-1025 (PTLAGQTLKG…SGLPGRSPDT (220 aa)). Residues 831–838 (QEVVRAFY) carry the PIP-box motif. ADP-ribosyl glutamic acid is present on glutamate 882. At lysine 916 the chain carries N6-(ADP-ribosyl)lysine. Position 916 is an N6-acetyllysine (lysine 916). Residues 1006-1025 (HVPRASPDDPSGLPGRSPDT) form a disordered region. Phosphoserine is present on serine 1011.

Belongs to the ARTD/PARP family. As to quaternary structure, interacts with MYC. Interacts with PARP14. Interacts (via-PIP box and ubiquitin-interacting motifs) with PCNA. Stimulated through its phosphorylation by CDK2. Acquires CDK-dependent phosphorylation through late-G1 to S phase, and from prometaphase to cytokinesis in the nucleolar organizing regions. Phosphorylation is suppressed in growth-arrested cells. Post-translationally, auto-mono-ADP-ribosylated on glutamate and lysine residues. Highly expressed in spleen and thymus. Intermediate levels in liver, kidney, pancreas, prostate, testis, ovary, intestine, and leukocytes. Low expression in heart, brain, placenta, lung, skeletal muscle, and colon.

It is found in the nucleus. The protein resides in the nucleolus. The protein localises to the cytoplasm. The catalysed reaction is L-lysyl-[protein] + NAD(+) = N(6)-(ADP-D-ribosyl)-L-lysyl-[protein] + nicotinamide + H(+). The enzyme catalyses L-aspartyl-[protein] + NAD(+) = 4-O-(ADP-D-ribosyl)-L-aspartyl-[protein] + nicotinamide. It catalyses the reaction L-glutamyl-[protein] + NAD(+) = 5-O-(ADP-D-ribosyl)-L-glutamyl-[protein] + nicotinamide. Its function is as follows. ADP-ribosyltransferase that mediates mono-ADP-ribosylation of glutamate and aspartate residues on target proteins. In contrast to PARP1 and PARP2, it is not able to mediate poly-ADP-ribosylation. Catalyzes mono-ADP-ribosylation of GSK3B, leading to negatively regulate GSK3B kinase activity. Involved in translesion DNA synthesis in response to DNA damage via its interaction with PCNA. This Homo sapiens (Human) protein is Protein mono-ADP-ribosyltransferase PARP10.